A 265-amino-acid polypeptide reads, in one-letter code: Uroporphyrinogen-III synthase (265 aa).

This sequence belongs to the uroporphyrinogen-III synthase family. Monomer.

It is found in the cytoplasm. The protein localises to the cytosol. The enzyme catalyses hydroxymethylbilane = uroporphyrinogen III + H2O. It participates in porphyrin-containing compound metabolism; protoporphyrin-IX biosynthesis; coproporphyrinogen-III from 5-aminolevulinate: step 3/4. Functionally, catalyzes cyclization of the linear tetrapyrrole, hydroxymethylbilane, to the macrocyclic uroporphyrinogen III, the branch point for the various sub-pathways leading to the wide diversity of porphyrins. Porphyrins act as cofactors for a multitude of enzymes that perform a variety of processes within the cell such as methionine synthesis (vitamin B12) or oxygen transport (heme). The polypeptide is Uroporphyrinogen-III synthase (Uros) (Mus musculus (Mouse)).